The sequence spans 416 residues: Cytochrome P450 monooxygenase PikC (416 aa).

Substrate-binding positions include Glu94, Ala187–Met191, and His238–Glu246. Cys354 provides a ligand contact to heme.

Belongs to the cytochrome P450 family. Heme is required as a cofactor.

It carries out the reaction narbomycin + 2 reduced [2Fe-2S]-[ferredoxin] + O2 + 2 H(+) = pikromycin + 2 oxidized [2Fe-2S]-[ferredoxin] + H2O. The catalysed reaction is narbomycin + 2 reduced [2Fe-2S]-[ferredoxin] + O2 + 2 H(+) = neopikromycin + 2 oxidized [2Fe-2S]-[ferredoxin] + H2O. The enzyme catalyses narbomycin + 4 reduced [2Fe-2S]-[ferredoxin] + 2 O2 + 4 H(+) = novapikromycin + 4 oxidized [2Fe-2S]-[ferredoxin] + 2 H2O. It catalyses the reaction 10-deoxymethymycin + 2 reduced [2Fe-2S]-[ferredoxin] + O2 + 2 H(+) = methymycin + 2 oxidized [2Fe-2S]-[ferredoxin] + H2O. It carries out the reaction 10-deoxymethymycin + 2 reduced [2Fe-2S]-[ferredoxin] + O2 + 2 H(+) = neomethymycin + 2 oxidized [2Fe-2S]-[ferredoxin] + H2O. The catalysed reaction is 10-deoxymethymycin + 4 reduced [2Fe-2S]-[ferredoxin] + 2 O2 + 4 H(+) = novamethymycin + 4 oxidized [2Fe-2S]-[ferredoxin] + 2 H2O. It participates in antibiotic biosynthesis. Functionally, catalyzes the hydroxylation of narbomycin to give rise to pikromycin, and of 10-deoxymethymycin (YC-17) to give rise to methymycin and neomethymycin during macrolide antibiotic biosynthesis. In addition, produces low amounts of neopicromycin, novapikromycin and novamethymycin. Requires the participation of a ferredoxin and a ferredoxin reductase for the transfer of electrons from NADPH to the monooxygenase. The polypeptide is Cytochrome P450 monooxygenase PikC (Streptomyces venezuelae).